The primary structure comprises 289 residues: Vesicular-fusion protein SEC17 (289 aa).

Belongs to the SNAP family.

The protein localises to the membrane. Functionally, required for vesicular transport between the endoplasmic reticulum and the Golgi apparatus. The sequence is that of Vesicular-fusion protein SEC17 (SEC17) from Coprinopsis cinerea (strain Okayama-7 / 130 / ATCC MYA-4618 / FGSC 9003) (Inky cap fungus).